A 147-amino-acid chain; its full sequence is Large ribosomal subunit protein uL13 (147 aa).

Belongs to the universal ribosomal protein uL13 family. Part of the 50S ribosomal subunit.

In terms of biological role, this protein is one of the early assembly proteins of the 50S ribosomal subunit, although it is not seen to bind rRNA by itself. It is important during the early stages of 50S assembly. The chain is Large ribosomal subunit protein uL13 from Pediococcus pentosaceus (strain ATCC 25745 / CCUG 21536 / LMG 10740 / 183-1w).